A 405-amino-acid chain; its full sequence is S-adenosylmethionine synthase (405 aa).

141–146 (GQGSVD) lines the ATP pocket.

This sequence belongs to the AdoMet synthase 2 family. It depends on Mg(2+) as a cofactor.

The enzyme catalyses L-methionine + ATP + H2O = S-adenosyl-L-methionine + phosphate + diphosphate. It participates in amino-acid biosynthesis; S-adenosyl-L-methionine biosynthesis; S-adenosyl-L-methionine from L-methionine: step 1/1. Functionally, catalyzes the formation of S-adenosylmethionine from methionine and ATP. In Methanococcus maripaludis (strain C7 / ATCC BAA-1331), this protein is S-adenosylmethionine synthase.